Reading from the N-terminus, the 241-residue chain is Ribosomal RNA small subunit methyltransferase G (241 aa).

S-adenosyl-L-methionine-binding positions include glycine 79, phenylalanine 84, 130–131, and arginine 150; that span reads AE.

It belongs to the methyltransferase superfamily. RNA methyltransferase RsmG family.

It is found in the cytoplasm. Its function is as follows. Specifically methylates the N7 position of a guanine in 16S rRNA. This Limosilactobacillus reuteri (strain DSM 20016) (Lactobacillus reuteri) protein is Ribosomal RNA small subunit methyltransferase G.